The primary structure comprises 158 residues: MVQIWQMEPYPCGDPRLPHHLFPPKKITPDELSKRTGTLYWKLDTLDQVALAKRLTTLKLEHSFKKEDIFTLDAETTANFDDKIEELFEESSVPFEQARMIIEGTAYYDVEDKNGQWVRIFCEYGDLILIPANTCFRFTTTPHNFVKMRRFYKDEDSE.

The protein belongs to the acireductone dioxygenase (ARD) family.

It localises to the cytoplasm. Its subcellular location is the nucleus. Its function is as follows. Probable inactive acireductone dioxygenase. This chain is Probable inactive acireductone dioxygenase 2, found in Caenorhabditis elegans.